Reading from the N-terminus, the 252-residue chain is Phosphoglycolate phosphatase (252 aa).

The active-site Nucleophile is Asp13. Residues Asp13, Asp15, and Asp192 each coordinate Mg(2+).

It belongs to the HAD-like hydrolase superfamily. CbbY/CbbZ/Gph/YieH family. Monomer. Mg(2+) is required as a cofactor. The cofactor is chloride.

The catalysed reaction is 2-phosphoglycolate + H2O = glycolate + phosphate. It participates in organic acid metabolism; glycolate biosynthesis; glycolate from 2-phosphoglycolate: step 1/1. Its function is as follows. Specifically catalyzes the dephosphorylation of 2-phosphoglycolate. Is involved in the dissimilation of the intracellular 2-phosphoglycolate formed during the DNA repair of 3'-phosphoglycolate ends, a major class of DNA lesions induced by oxidative stress. This Shigella boydii serotype 4 (strain Sb227) protein is Phosphoglycolate phosphatase.